Consider the following 116-residue polypeptide: Ribonuclease P protein component (116 aa).

It belongs to the RnpA family. Consists of a catalytic RNA component (M1 or rnpB) and a protein subunit.

It catalyses the reaction Endonucleolytic cleavage of RNA, removing 5'-extranucleotides from tRNA precursor.. Its function is as follows. RNaseP catalyzes the removal of the 5'-leader sequence from pre-tRNA to produce the mature 5'-terminus. It can also cleave other RNA substrates such as 4.5S RNA. The protein component plays an auxiliary but essential role in vivo by binding to the 5'-leader sequence and broadening the substrate specificity of the ribozyme. The protein is Ribonuclease P protein component of Lachnoclostridium phytofermentans (strain ATCC 700394 / DSM 18823 / ISDg) (Clostridium phytofermentans).